A 1393-amino-acid chain; its full sequence is Rab3 GTPase-activating protein non-catalytic subunit (1393 aa).

Residues 36–67 (RDPSKSTDWEDDGWGAWEENEPQEPEEEGNTC) are disordered. Position 39 is a phosphoserine (Ser39). Acidic residues predominate over residues 44 to 64 (WEDDGWGAWEENEPQEPEEEG). Residue Ser450 is modified to Phosphoserine. Thr901 is subject to Phosphothreonine. Phosphoserine is present on residues Ser916 and Ser978.

Belongs to the Rab3-GAP regulatory subunit family. In terms of assembly, the Rab3 GTPase-activating complex is a heterodimer composed of RAB3GAP1 and RAB3GAP2. The Rab3 GTPase-activating complex interacts with DMXL2. Interacts with LMAN1. In terms of tissue distribution, ubiquitous.

Its subcellular location is the cytoplasm. It localises to the endoplasmic reticulum. In terms of biological role, regulatory subunit of the Rab3 GTPase-activating (Rab3GAP) complex composed of RAB3GAP1 and RAB3GAP2, which has GTPase-activating protein (GAP) activity towards various Rab3 subfamily members (RAB3A, RAB3B, RAB3C and RAB3D), RAB5A and RAB43, and guanine nucleotide exchange factor (GEF) activity towards RAB18. As part of the Rab3GAP complex, acts as a GAP for Rab3 proteins by converting active RAB3-GTP to the inactive form RAB3-GDP. Rab3 proteins are involved in regulated exocytosis of neurotransmitters and hormones. The Rab3GAP complex acts as a GEF for RAB18 by promoting the conversion of inactive RAB18-GDP to the active form RAB18-GTP. Recruits and stabilizes RAB18 at the cis-Golgi membrane in human fibroblasts where RAB18 is most likely activated. Also involved in RAB18 recruitment at the endoplasmic reticulum (ER) membrane where it maintains proper ER structure. Required for normal eye and brain development. May participate in neurodevelopmental processes such as proliferation, migration and differentiation before synapse formation, and non-synaptic vesicular release of neurotransmitters. This Homo sapiens (Human) protein is Rab3 GTPase-activating protein non-catalytic subunit.